The sequence spans 82 residues: Small ribosomal subunit protein bS16 (82 aa).

Belongs to the bacterial ribosomal protein bS16 family.

The protein is Small ribosomal subunit protein bS16 of Psychromonas ingrahamii (strain DSM 17664 / CCUG 51855 / 37).